The following is a 93-amino-acid chain: Small ribosomal subunit protein uS19m (93 aa).

Belongs to the universal ribosomal protein uS19 family.

It localises to the mitochondrion. The protein is Small ribosomal subunit protein uS19m (RPS19) of Marchantia polymorpha (Common liverwort).